The following is a 113-amino-acid chain: Iron-sulfur cluster insertion protein ErpA (113 aa).

Iron-sulfur cluster-binding residues include Cys41, Cys105, and Cys107.

Belongs to the HesB/IscA family. Homodimer. Iron-sulfur cluster is required as a cofactor.

Functionally, required for insertion of 4Fe-4S clusters for at least IspG. The sequence is that of Iron-sulfur cluster insertion protein ErpA from Vibrio parahaemolyticus serotype O3:K6 (strain RIMD 2210633).